A 272-amino-acid chain; its full sequence is Orotidine 5'-phosphate decarboxylase (272 aa).

Lys95 serves as the catalytic Proton donor.

This sequence belongs to the OMP decarboxylase family. Type 2 subfamily.

The catalysed reaction is orotidine 5'-phosphate + H(+) = UMP + CO2. It functions in the pathway pyrimidine metabolism; UMP biosynthesis via de novo pathway; UMP from orotate: step 2/2. This chain is Orotidine 5'-phosphate decarboxylase, found in Cupriavidus metallidurans (strain ATCC 43123 / DSM 2839 / NBRC 102507 / CH34) (Ralstonia metallidurans).